The sequence spans 492 residues: Rab5 GDP/GTP exchange factor (492 aa).

An interaction with ubiquitinated proteins region spans residues 1–74; it reads MSLKSERRGI…EEEAFASSQS (74 aa). The A20-type zinc finger occupies 13 to 47; it reads DQSELLCKKGCGYYGNPAWQGFCSKCWREEYHKAR. Zn(2+)-binding residues include Cys-19, Cys-23, Cys-35, and Cys-38. The interval 66 to 85 is disordered; it reads EEAFASSQSSQGAQSLTFSK. Over residues 69–84 the composition is skewed to low complexity; the sequence is FASSQSSQGAQSLTFS. Residues Ser-125 and Ser-133 each carry the phosphoserine modification. Residues Lys-152 and Lys-171 each carry the N6-acetyllysine modification. Residues 233-376 enclose the VPS9 domain; that stretch reads EKKDLAIQKR…IEKLDAQSLN (144 aa). Phosphoserine occurs at positions 374, 378, 391, and 401. Residues 408–449 adopt a coiled-coil conformation; sequence VKQMYKNLDLLSQLNERQERIMNEAKKLEKDLIDWTDGIAKE. The tract at residues 471-492 is disordered; sequence IDSENVENDKLPPPLQPQVYAG.

In terms of assembly, heterodimer with RABEP1. The heterodimer binds RAB4A and RAB5A that have been activated by GTP-binding. Binds TSC2, GGA1, GGA2, GGA3, AP1G1 and AP1G2. Interacts with RAB21, and with 100-fold lower affinity also with RAB22. Interacts with ubiquitinated EGFR. Interacts with RGS14; the interaction is GTP-dependent. In terms of processing, monoubiquitinated. As to expression, detected in brain.

It is found in the cytoplasm. The protein localises to the early endosome. The protein resides in the recycling endosome. Functionally, rab effector protein acting as linker between gamma-adaptin and RAB5A. Involved in endocytic membrane fusion and membrane trafficking of recycling endosomes. Stimulates nucleotide exchange on RAB5A. Can act as a ubiquitin ligase. The polypeptide is Rab5 GDP/GTP exchange factor (RABGEF1) (Bos taurus (Bovine)).